Consider the following 418-residue polypeptide: Tryptophan synthase beta chain (418 aa).

Residues 1 to 17 (MTSTLPNASTPDPSSLQ) show a composition bias toward polar residues. The tract at residues 1–23 (MTSTLPNASTPDPSSLQPAVRPG) is disordered. Lys111 bears the N6-(pyridoxal phosphate)lysine mark.

The protein belongs to the TrpB family. In terms of assembly, tetramer of two alpha and two beta chains. Pyridoxal 5'-phosphate is required as a cofactor.

The enzyme catalyses (1S,2R)-1-C-(indol-3-yl)glycerol 3-phosphate + L-serine = D-glyceraldehyde 3-phosphate + L-tryptophan + H2O. It participates in amino-acid biosynthesis; L-tryptophan biosynthesis; L-tryptophan from chorismate: step 5/5. Functionally, the beta subunit is responsible for the synthesis of L-tryptophan from indole and L-serine. In Synechococcus sp. (strain CC9605), this protein is Tryptophan synthase beta chain.